The primary structure comprises 1241 residues: High-affinity potassium transport protein (1241 aa).

The next 2 helical transmembrane spans lie at 49–70 and 78–98; these read NFIA…ILLY and IDAL…TVDV. N-linked (GlcNAc...) asparagine glycosylation is present at N100. The chain crosses the membrane as a helical span at residues 107 to 127; sequence IILYIICCISTPIAVHSCLAF. Disordered stretches follow at residues 162-241, 253-316, and 329-570; these read TART…SLDD, KYHG…TPED, and EGTA…QLQQ. Over residues 164-177 the composition is skewed to polar residues; it reads RTMTKSKTGGTQRV. Basic and acidic residues-rich tracts occupy residues 181-191 and 199-214; these read GKSDKRDDFQE and VNRD…HNSR. A compositionally biased stretch (low complexity) spans 215-238; that stretch reads DSNSNANTNSSNNNSINHNGSSGS. N223, N227, N233, N257, N274, N353, and N364 each carry an N-linked (GlcNAc...) asparagine glycan. Composition is skewed to polar residues over residues 268-280 and 345-365; these read NTAT…QKLK and TDGT…TMNE. Over residues 366–375 the composition is skewed to basic and acidic residues; the sequence is SKIRIQDKGA. Positions 380 to 411 are enriched in polar residues; it reads DQDSVLHSSNSSACTSDEDSLPTNFGGTTPSL. N-linked (GlcNAc...) asparagine glycosylation is found at N389 and N442. Basic residues-rich tracts occupy residues 446 to 455 and 482 to 497; these read PPRKASKSKR and HLPK…KRRL. The span at 498–509 shows a compositional bias: polar residues; sequence STGSIDKNSSSD. 2 N-linked (GlcNAc...) asparagine glycosylation sites follow: N505 and N538. Over residues 520 to 545 the composition is skewed to acidic residues; it reads NDDDDGNEGDNMEEYFADNESGDEDD. Residues 561-570 are compositionally biased toward low complexity; it reads KQQQQHQLQQ. N-linked (GlcNAc...) asparagine glycans are attached at residues N584, N660, N681, N691, and N741. The tract at residues 677-714 is disordered; sequence NSHRNGSEDVSSDSNETTYPLNGNNDHSQNDANGYPTY. The segment covering 684 to 708 has biased composition (polar residues); it reads EDVSSDSNETTYPLNGNNDHSQNDA. 5 helical membrane passes run 784–806, 819–840, 844–864, 868–888, and 904–924; these read ILVV…WINL, VSPT…GLTL, SMMS…FIII, GFPI…PDLS, and CFTL…LVGL. An N-linked (GlcNAc...) asparagine glycan is attached at N925. The next 2 membrane-spanning stretches (helical) occupy residues 929–949 and 977–997; these read WILF…SKGY and SIQV…AISI. The tract at residues 1011–1073 is disordered; sequence YGEMGGKPED…ENENPNEEST (63 aa). Positions 1021-1041 are enriched in acidic residues; the sequence is TDTEEDGDCDDEDDDNEEEES. Basic residues predominate over residues 1050–1062; it reads GKSKKETKKKKKR. A run of 2 helical transmembrane segments spans residues 1084–1104 and 1117–1137; these read QLSF…ICER and VFTI…SLGY. Residue N1141 is glycosylated (N-linked (GlcNAc...) asparagine). The segment at 1222–1241 is disordered; the sequence is DELKHKRSLSRSSKRSTKTN. Residues 1226-1241 show a composition bias toward basic residues; the sequence is HKRSLSRSSKRSTKTN.

This sequence belongs to the TrkH potassium transport family.

The protein resides in the membrane. This protein is required for high-affinity potassium transport. The polypeptide is High-affinity potassium transport protein (TRK1) (Saccharomyces uvarum (Yeast)).